The following is a 140-amino-acid chain: Photosystem I reaction center subunit XI (140 aa).

A run of 3 helical transmembrane segments spans residues 48 to 68, 79 to 99, and 119 to 139; these read LEIG…LGPL, LLSA…YGAV, and SGFL…LTLF.

The protein belongs to the PsaL family.

The protein localises to the plastid. It is found in the chloroplast thylakoid membrane. This Cyanidioschyzon merolae (strain NIES-3377 / 10D) (Unicellular red alga) protein is Photosystem I reaction center subunit XI.